A 1224-amino-acid chain; its full sequence is Tyrosine-protein kinase abl-1 (1224 aa).

Residues 115 to 188 (SSAPLFVALY…PSNFIAPYNS (74 aa)) enclose the SH3 domain. Residues 194–284 (WYHGKISRSD…GLICLLMYPA (91 aa)) form the SH2 domain. The Protein kinase domain maps to 311-562 (IIMHNKLGGG…PRFRDIHFNL (252 aa)). Residues 317–325 (LGGGQYGDV), lysine 340, and 385–391 (EFMCNGN) contribute to the ATP site. Aspartate 432 functions as the Proton acceptor in the catalytic mechanism. A Kinase activation loop motif is present at residues 450 to 474 (DFGLARFMKEDTYTAHAGAKFPIKW). The segment covering 579–620 (LKKNNDKKLESDKRRSNVRERSDSKSRHSSHHDRDRDRESLH) has biased composition (basic and acidic residues). Disordered regions lie at residues 579–671 (LKKN…NTKP), 736–775 (KEST…STYV), 796–881 (KRSE…DVGM), 914–937 (LRHV…ATDN), and 968–1016 (RPFS…RSNG). Polar residues-rich tracts occupy residues 639–655 (SVSF…TSFR) and 746–760 (AGSS…NDSL). 2 stretches are compositionally biased toward basic and acidic residues: residues 797-819 (RSET…KSEK) and 864-877 (PDSK…ETTK). Over residues 973–984 (QCPNNSTSSAIS) the composition is skewed to polar residues. The segment covering 1001–1016 (YEERMKPELPRKRSNG) has biased composition (basic and acidic residues).

It belongs to the protein kinase superfamily. Tyr protein kinase family. ABL subfamily. In terms of assembly, interacts (via SH2 and SH3 domains) with mig-13; the interaction is direct. May interact with soem-1.

The protein localises to the cell membrane. It is found in the cytoplasm. It catalyses the reaction L-tyrosyl-[protein] + ATP = O-phospho-L-tyrosyl-[protein] + ADP + H(+). Functions downstream of migratory protein mig-13 and is involved in Q neuroblast migration during larval development. Recruited by mig-13 to the leading edge of Q neuroblasts and their descendents to signal downstream, likely to the wve-1 pathway, and direct migration along the anteroposterior body axis. Promotes germline cell apoptosis in response to oxidative, osmotic and heat shock stresses. This is Tyrosine-protein kinase abl-1 (abl-1) from Caenorhabditis elegans.